Consider the following 265-residue polypeptide: Undecaprenyl-diphosphatase 1 (265 aa).

7 helical membrane passes run I4–S24, A42–H62, F84–I104, L108–A128, S184–L204, M217–L237, and L245–L265.

This sequence belongs to the UppP family.

The protein resides in the cell membrane. It carries out the reaction di-trans,octa-cis-undecaprenyl diphosphate + H2O = di-trans,octa-cis-undecaprenyl phosphate + phosphate + H(+). In terms of biological role, catalyzes the dephosphorylation of undecaprenyl diphosphate (UPP). Confers resistance to bacitracin. This Bacillus cereus (strain ZK / E33L) protein is Undecaprenyl-diphosphatase 1.